A 389-amino-acid chain; its full sequence is Chorismate synthase (389 aa).

2 residues coordinate NADP(+): Arg41 and Arg47. Residues 129–131 (RSS), 247–248 (NA), Gly291, 306–310 (KPIST), and Arg332 each bind FMN.

It belongs to the chorismate synthase family. In terms of assembly, homotetramer. The cofactor is FMNH2.

The enzyme catalyses 5-O-(1-carboxyvinyl)-3-phosphoshikimate = chorismate + phosphate. It functions in the pathway metabolic intermediate biosynthesis; chorismate biosynthesis; chorismate from D-erythrose 4-phosphate and phosphoenolpyruvate: step 7/7. Its function is as follows. Catalyzes the anti-1,4-elimination of the C-3 phosphate and the C-6 proR hydrogen from 5-enolpyruvylshikimate-3-phosphate (EPSP) to yield chorismate, which is the branch point compound that serves as the starting substrate for the three terminal pathways of aromatic amino acid biosynthesis. This reaction introduces a second double bond into the aromatic ring system. In Rubrobacter xylanophilus (strain DSM 9941 / JCM 11954 / NBRC 16129 / PRD-1), this protein is Chorismate synthase.